The primary structure comprises 613 residues: DNA polymerase II small subunit (613 aa).

Belongs to the DNA polymerase delta/II small subunit family. In terms of assembly, heterodimer of a large subunit and a small subunit.

The catalysed reaction is DNA(n) + a 2'-deoxyribonucleoside 5'-triphosphate = DNA(n+1) + diphosphate. The enzyme catalyses Exonucleolytic cleavage in the 3'- to 5'-direction to yield nucleoside 5'-phosphates.. Its function is as follows. Possesses two activities: a DNA synthesis (polymerase) and an exonucleolytic activity that degrades single-stranded DNA in the 3' to 5' direction. Has a template-primer preference which is characteristic of a replicative DNA polymerase. The polypeptide is DNA polymerase II small subunit (polB) (Pyrococcus furiosus (strain ATCC 43587 / DSM 3638 / JCM 8422 / Vc1)).